A 479-amino-acid polypeptide reads, in one-letter code: MSHNLKQLFQQHNVKGLSINSKTVKDKDIFFAIKGQNTDGNDFIKDALSKGAVLVITDNKKNIVIDKVIYVKDVQAALYEAIEIFYPKKPKDLIAVTGTNGKSSVVSYIAQTYSLLGKKAASIGTIGVEIFGCVNLINDVPELTTLDYLSFRKIAHNLAENGIEYLVFEASSHGLDQARLREIKVNIACFTSFSQDHLDYHHTKENYLLAKLKLFINHLLPNGIAILNSDIEEIEFVKDYLHNHNIKFITVGTKGDLEITRLNGSLKGQNINFTFNNREYNFNTPIIGSFQASNLLIAVLSIHYIGFAFDDVIDSLVEVKAVKGRMERIDNTNIFVDYAHTPDALEKALTELKNIKLRDSKLSVVFGCGGNRDKAKRSLMGQIAAKRADTIIITDDNPRHEDPKLIRAEIISGIEKADYTEIANREEAIKYGINNLKQDDILLVAGKGHENYQIIGDKKLPFDDAEVVRKCVKVCHPVA.

Ser21 is a binding site for UDP-N-acetyl-alpha-D-muramoyl-L-alanyl-D-glutamate. 98–104 is a binding site for ATP; that stretch reads GTNGKSS. Residues 144 to 145, Ser171, Gln177, and Arg179 each bind UDP-N-acetyl-alpha-D-muramoyl-L-alanyl-D-glutamate; that span reads TT. N6-carboxylysine is present on Lys211. Meso-2,6-diaminopimelate contacts are provided by residues Arg372, 396–399, Gly446, and Glu450; that span reads DNPR. The Meso-diaminopimelate recognition motif motif lies at 396–399; sequence DNPR.

This sequence belongs to the MurCDEF family. MurE subfamily. Requires Mg(2+) as cofactor. Carboxylation is probably crucial for Mg(2+) binding and, consequently, for the gamma-phosphate positioning of ATP.

The protein localises to the cytoplasm. It carries out the reaction UDP-N-acetyl-alpha-D-muramoyl-L-alanyl-D-glutamate + meso-2,6-diaminopimelate + ATP = UDP-N-acetyl-alpha-D-muramoyl-L-alanyl-gamma-D-glutamyl-meso-2,6-diaminopimelate + ADP + phosphate + H(+). It participates in cell wall biogenesis; peptidoglycan biosynthesis. In terms of biological role, catalyzes the addition of meso-diaminopimelic acid to the nucleotide precursor UDP-N-acetylmuramoyl-L-alanyl-D-glutamate (UMAG) in the biosynthesis of bacterial cell-wall peptidoglycan. The polypeptide is UDP-N-acetylmuramoyl-L-alanyl-D-glutamate--2,6-diaminopimelate ligase (Rickettsia conorii (strain ATCC VR-613 / Malish 7)).